A 739-amino-acid polypeptide reads, in one-letter code: Malate synthase G (739 aa).

Residues 1–18 (MTEQELLSAQTADNAGTD) show a composition bias toward polar residues. The tract at residues 1–23 (MTEQELLSAQTADNAGTDSTERV) is disordered. Residues Val-135, 142–143 (RF), Ser-292, and Arg-329 each bind acetyl-CoA. Residue Arg-356 is the Proton acceptor of the active site. Residues Arg-356, Glu-447, and 472–475 (GFLD) each bind glyoxylate. Residues Glu-447 and Asp-475 each contribute to the Mg(2+) site. Position 556 (Pro-556) interacts with acetyl-CoA. Cys-633 is subject to Cysteine sulfenic acid (-SOH). Residue Asp-647 is the Proton donor of the active site.

This sequence belongs to the malate synthase family. GlcB subfamily. As to quaternary structure, monomer. Requires Mg(2+) as cofactor.

It localises to the cytoplasm. The enzyme catalyses glyoxylate + acetyl-CoA + H2O = (S)-malate + CoA + H(+). The protein operates within carbohydrate metabolism; glyoxylate cycle; (S)-malate from isocitrate: step 2/2. Inhibited by oxalate, glycolate and ATP. Functionally, involved in the glycolate utilization. Catalyzes the condensation and subsequent hydrolysis of acetyl-coenzyme A (acetyl-CoA) and glyoxylate to form malate and CoA. The sequence is that of Malate synthase G from Corynebacterium glutamicum (strain ATCC 13032 / DSM 20300 / JCM 1318 / BCRC 11384 / CCUG 27702 / LMG 3730 / NBRC 12168 / NCIMB 10025 / NRRL B-2784 / 534).